We begin with the raw amino-acid sequence, 379 residues long: Protein OSCP1 (379 aa).

Predominantly expressed in testis.

Its subcellular location is the basal cell membrane. In terms of biological role, may be involved in drug clearance in the placenta. The chain is Protein OSCP1 (Oscp1) from Mus musculus (Mouse).